A 68-amino-acid chain; its full sequence is Palustrin-1c (68 aa).

An N-terminal signal peptide occupies residues 1–22; sequence MFTMKKSLLLLFFLGTISLSLC. Positions 23–39 are excised as a propeptide; it reads EEERGADEEEGDGEKLT. C62 and C68 are oxidised to a cystine.

In terms of tissue distribution, expressed by the skin glands.

The protein resides in the secreted. Antimicrobial peptide. This is Palustrin-1c from Odorrana versabilis (Chinese bamboo leaf odorous frog).